The primary structure comprises 122 residues: MARIAGVNIPTGKRVPIALTYIHGIGSKFADEIVSAVGIEPTRRVNELSDAEVLQIREYIDANLTVEGDLRRETQMNIKRLMDLGSYRGLRHRRGLPVRGQRTHTNARTRKGPAKPIAGKKK.

The disordered stretch occupies residues 92–122 (HRRGLPVRGQRTHTNARTRKGPAKPIAGKKK).

Belongs to the universal ribosomal protein uS13 family. Part of the 30S ribosomal subunit. Forms a loose heterodimer with protein S19. Forms two bridges to the 50S subunit in the 70S ribosome.

Located at the top of the head of the 30S subunit, it contacts several helices of the 16S rRNA. In the 70S ribosome it contacts the 23S rRNA (bridge B1a) and protein L5 of the 50S subunit (bridge B1b), connecting the 2 subunits; these bridges are implicated in subunit movement. Contacts the tRNAs in the A and P-sites. This is Small ribosomal subunit protein uS13 from Paracoccus denitrificans (strain Pd 1222).